A 393-amino-acid chain; its full sequence is MNVIKLTDLDVSGKRVFIRADLNVPQDEAGNITEDTRIRASLPSIKYCLEKGAAVMVTSHLGRPTEGELNHEDSLMPVAVRLGQMLHTSVRLITDWVDGGFEVKPGEVVLLENCRVNKGEKKNNDELAQKMAKLCDIYVNDAFGTAHRAEATTHGIAKYAPVACAGMLMGAEIDALSKALHEPKRPLVAIVGGSKVSSKLTILKSLASKVDQLIVGGGIANTFLLADGKRIGHSLAEPDLVKEAHTIMDIMKERGAEVPLPTDVVVADEVSALARANKISVDDVHANDRILDVGPKTAAKFAEIIANAGTIVWNGPVGVFELPQFAGGTKMMASAIAHSEAFSIAGGGDTLAAIAKFHIADDVGYISTGGGAFLEFLEGKTLPAIAILEERAA.

Substrate contacts are provided by residues 21–23 (DLN), Arg-37, 60–63 (HLGR), Arg-115, and Arg-148. Residues Lys-199, Glu-321, and 347-350 (GGDT) each bind ATP.

The protein belongs to the phosphoglycerate kinase family. In terms of assembly, monomer.

Its subcellular location is the cytoplasm. The catalysed reaction is (2R)-3-phosphoglycerate + ATP = (2R)-3-phospho-glyceroyl phosphate + ADP. It functions in the pathway carbohydrate degradation; glycolysis; pyruvate from D-glyceraldehyde 3-phosphate: step 2/5. The chain is Phosphoglycerate kinase from Dechloromonas aromatica (strain RCB).